The chain runs to 1220 residues: DNA polymerase catalytic subunit (1220 aa).

This sequence belongs to the DNA polymerase type-B family. Forms a complex with the ssDNA-binding protein, the DNA polymerase processivity factor, and the alkaline exonuclease. Interacts with the helicase-primase complex composed of the primase, the helicase and the primase-associated factor; this interaction may coordinate leading and lagging strand DNA synthesis at the replication fork.

It localises to the host nucleus. It carries out the reaction DNA(n) + a 2'-deoxyribonucleoside 5'-triphosphate = DNA(n+1) + diphosphate. The enzyme catalyses Endonucleolytic cleavage to 5'-phosphomonoester.. Replicates viral genomic DNA. The replication complex is composed of six viral proteins: the DNA polymerase, processivity factor, primase, primase-associated factor, helicase, and ssDNA-binding protein. Additionally, the polymerase contains an intrinsic ribonuclease H (RNase H) activity that specifically degrades RNA/DNA heteroduplexes or duplex DNA substrates in the 5' to 3' direction. Therefore, it can catalyze the excision of the RNA primers that initiate the synthesis of Okazaki fragments at a replication fork during viral DNA replication. The chain is DNA polymerase catalytic subunit (MDV043) from Gallid herpesvirus 2 (strain Chicken/Md5/ATCC VR-987) (GaHV-2).